The following is a 106-amino-acid chain: Late cornified envelope protein 2A (106 aa).

The span at 1–10 shows a compositional bias: low complexity; that stretch reads MSCQQNQQQC. The tract at residues 1-25 is disordered; sequence MSCQQNQQQCQPPPKCPPKCPPKCP. The segment covering 11-25 has biased composition (pro residues); sequence QPPPKCPPKCPPKCP.

The protein belongs to the LCE family. Interacts with CYSRT1. Skin-specific. Expression was readily detected in adult trunk skin, adult arm skin, fetal skin, penal skin, vulva, esophagus and tongue. Not expressed in the cervix, rectum, lung, colon, or placenta.

Precursors of the cornified envelope of the stratum corneum. The chain is Late cornified envelope protein 2A (LCE2A) from Homo sapiens (Human).